Consider the following 307-residue polypeptide: MTKKMGLLVMAYGTPYKESDIEPYYTDIRHGKRPSEEELQDLKDRYEFIGGLSPLAGTTDDQADALVSALNKAYADVEFKLYLGLKHISPFIEDAVEQMHNDGITEAITVVLAPHYSSFSVGSYDKRADEEAAKYGIQLTHVKHYYEQPKFIEYWTNKVNETLAQIPEEEHKDTVLVVSAHSLPKGLIEKNNDPYPQELEHTALLIKEQSNIEHIAIGWQSEGNTGTPWLGPDVQDLTRDLYEKHQYKNFIYTPVGFVCEHLEVLYDNDYECKVVCDDIGANYYRPKMPNTHPLFIGAIIDEIKSIF.

Fe-coproporphyrin III contacts are provided by residues tyrosine 12, arginine 29, 45–46 (RY), serine 53, and tyrosine 124. Fe(2+) contacts are provided by histidine 181 and glutamate 263.

The protein belongs to the ferrochelatase family.

It is found in the cytoplasm. The enzyme catalyses Fe-coproporphyrin III + 2 H(+) = coproporphyrin III + Fe(2+). The protein operates within porphyrin-containing compound metabolism; protoheme biosynthesis. Involved in coproporphyrin-dependent heme b biosynthesis. Catalyzes the insertion of ferrous iron into coproporphyrin III to form Fe-coproporphyrin III. It can also insert iron into protoporphyrin IX, but it has a much stronger preference for coproprophyrin III as the substrate. The chain is Coproporphyrin III ferrochelatase from Staphylococcus aureus (strain NCTC 8325 / PS 47).